Here is a 585-residue protein sequence, read N- to C-terminus: Glycerol-3-phosphate acyltransferase 1 (585 aa).

A run of 3 helical transmembrane segments spans residues 126–146, 334–354, and 356–376; these read FFPYFMLVAFEGGSIIRAILL, TPLATLAMFIWLPIGFLLAVF, and ISVGVFLPYHVANFLASMSGV. The HXXXXD motif motif lies at 403–408; it reads HRTLLD.

Belongs to the GPAT/DAPAT family. In terms of tissue distribution, highly expressed in developing siliques and flower buds. Weakly or not expressed in roots, seedlings and leaves.

It is found in the membrane. The protein localises to the mitochondrion. The enzyme catalyses sn-glycerol 3-phosphate + an acyl-CoA = a 1-acyl-sn-glycero-3-phosphate + CoA. Its pathway is phospholipid metabolism; CDP-diacylglycerol biosynthesis; CDP-diacylglycerol from sn-glycerol 3-phosphate: step 1/3. Functionally, esterifies acyl-group from acyl-ACP to the sn-1 position of glycerol-3-phosphate, an essential step in glycerolipid biosynthesis. Involved in pollen development, by being required for tapetum differentiation and male fertility. In addition to the sporophytic effect, it also exerts a gametophytic effect on pollen performance. The protein is Glycerol-3-phosphate acyltransferase 1 (GPAT1) of Arabidopsis thaliana (Mouse-ear cress).